The primary structure comprises 358 residues: COP9 signalosome complex subunit 5b (358 aa).

Met1 is subject to N-acetylmethionine. In terms of domain architecture, MPN spans Val59 to Gly196. 3 residues coordinate Zn(2+): His142, His144, and Asp155. The JAMM motif motif lies at His142–Asp155. Over residues Met338–Ser349 the composition is skewed to polar residues. A disordered region spans residues Met338–Tyr358.

This sequence belongs to the peptidase M67A family. CSN5 subfamily. As to quaternary structure, component of the CSN complex, probably composed of CSN1, CSN2, CSN3, CSN4, CSN5 (CSN5A or CSN5B), CSN6 (CSN6A or CSN6B), CSN7 and CSN8. CSN5A or CSN5B are present within distinct CSN complexes each containing only one copy of CSN5. Interacts with itself. In the complex, it is located in the center and probably interacts directly with CSN4 and CSN6A or CSN6B. Also exists as monomeric form. Interacts with CYT1 in vitro and in planta. Interacts with FLZ3. A divalent metal cation is required as a cofactor. Ubiquitously expressed. Highly expressed in flowers and roots. Expressed at lower level in seedlings and siliques.

Its subcellular location is the cytoplasm. The protein resides in the nucleus. Functionally, probable protease subunit of the COP9 signalosome complex (CSN), a complex involved in various cellular and developmental processes such as photomorphogenesis and auxin and jasmonate responses. The CSN complex is an essential regulator of the ubiquitin (Ubl) conjugation pathway by mediating the deneddylation of the cullin subunits of the SCF-type E3 ligase complexes, leading to decrease the Ubl ligase activity of SCF. In the complex, it probably acts as the catalytic center that mediates the cleavage of Nedd8 from cullins. It however has no metalloprotease activity by itself and requires the other subunits of the CSN complex. The CSN complex is involved in repression of photomorphogenesis in darkness by regulating the activity of COP1-containing Ubl ligase complexes. The complex is also required for degradation of PSIAA6 by regulating the activity of the Ubl ligase SCF-TIR complex. Not involved in CSN's deneddylation/derubylation activity. Essential for the structural integrity of the CSN holocomplex. This Arabidopsis thaliana (Mouse-ear cress) protein is COP9 signalosome complex subunit 5b.